Here is a 334-residue protein sequence, read N- to C-terminus: MNTILPCQDQYFVGGQSYNCPYSTTTSESSVDVSTETWVSFWAAGLLDNRELQQAPQAQESFSDSNFPLPDLCSWEEAQLSSQLYRNKQLQDTLVQKEEELARLHEENNHLRQYLNSALVKCLEEKAKKLLSSDEFSKAYGKFRKGKRKSKEQRYSPAEIPHPKNAKRNLSSEFANCEEQAGPPVDPWVLQTLGLKDLDTIDDTSSANYSALASHPRRVASTFSQFPDDAVDYKNIPREDMPIDYRGDRTTPLHSTATHGEDFHILSQLSNPPVGLKTLPYYTAHVSPNKTEMAFSTSLSPHCNVKTHSFHQGQAFVRRDEEGGWKFTWVPKQS.

Positions Ser82–Leu119 form a coiled coil. Residues Phe143–Lys167 form a disordered region.

It belongs to the GEMC1 family. Post-translationally, highly phosphorylated by CDK2; stimulates initiation of DNA replication.

It is found in the nucleus. Functionally, regulator of DNA replication. Promotes initiation of chromosomal DNA replication by mediating TOPBP1- and CDK2-dependent recruitment of CDC45L onto replication origins. This Homo sapiens (Human) protein is Geminin coiled-coil domain-containing protein 1 (GMNC).